Consider the following 222-residue polypeptide: Cytochrome b6 (222 aa).

Residues 39-59 (IFYCLGGITLVCFIIQFATGF) traverse the membrane as a helical segment. Cysteine 42 is a binding site for heme c. Heme b-binding residues include histidine 93 and histidine 107. The next 3 membrane-spanning stretches (helical) occupy residues 97-117 (ASMM…TGGF), 123-143 (LTWM…VTGY), and 193-213 (LHTF…FLMI). Heme b contacts are provided by histidine 194 and histidine 209.

Belongs to the cytochrome b family. PetB subfamily. The 4 large subunits of the cytochrome b6-f complex are cytochrome b6, subunit IV (17 kDa polypeptide, PetD), cytochrome f and the Rieske protein, while the 4 small subunits are PetG, PetL, PetM and PetN. The complex functions as a dimer. Heme b is required as a cofactor. Requires heme c as cofactor.

It localises to the cellular thylakoid membrane. Its function is as follows. Component of the cytochrome b6-f complex, which mediates electron transfer between photosystem II (PSII) and photosystem I (PSI), cyclic electron flow around PSI, and state transitions. The chain is Cytochrome b6 from Rippkaea orientalis (strain PCC 8801 / RF-1) (Cyanothece sp. (strain PCC 8801)).